A 224-amino-acid polypeptide reads, in one-letter code: 2-C-methyl-D-erythritol 4-phosphate cytidylyltransferase (224 aa).

Belongs to the IspD/TarI cytidylyltransferase family. IspD subfamily.

It carries out the reaction 2-C-methyl-D-erythritol 4-phosphate + CTP + H(+) = 4-CDP-2-C-methyl-D-erythritol + diphosphate. It functions in the pathway isoprenoid biosynthesis; isopentenyl diphosphate biosynthesis via DXP pathway; isopentenyl diphosphate from 1-deoxy-D-xylulose 5-phosphate: step 2/6. Functionally, catalyzes the formation of 4-diphosphocytidyl-2-C-methyl-D-erythritol from CTP and 2-C-methyl-D-erythritol 4-phosphate (MEP). This chain is 2-C-methyl-D-erythritol 4-phosphate cytidylyltransferase, found in Saccharopolyspora erythraea (strain ATCC 11635 / DSM 40517 / JCM 4748 / NBRC 13426 / NCIMB 8594 / NRRL 2338).